The primary structure comprises 116 residues: Large ribosomal subunit protein uL18 (116 aa).

This sequence belongs to the universal ribosomal protein uL18 family. Part of the 50S ribosomal subunit; part of the 5S rRNA/L5/L18/L25 subcomplex. Contacts the 5S and 23S rRNAs.

In terms of biological role, this is one of the proteins that bind and probably mediate the attachment of the 5S RNA into the large ribosomal subunit, where it forms part of the central protuberance. The sequence is that of Large ribosomal subunit protein uL18 from Shewanella sp. (strain ANA-3).